The chain runs to 287 residues: MHRASHHELRAMFRALLDSSRCYHTASVFDPMSARIAADLGFECGILGGSVASLQVLAAPDFALITLSEFVEQATRIGRVARLPVIADADHGYGNALNVMRTVVELERAGIAALTIEDTLLPAQFGRKSTDLICVEEGVGKIRAALEARVDPALTIIARTNAELIDVDAVIQRTLAYQEAGADGICLVGVRDFAHLEAIAEHLHIPLMLVTYGNPQLRDDARLARLGVRIVVNGHAAYFAAIKATYDCLREERGAVASDLTASELSKKYTFPEEYQAWARDYMEVKE.

A substrate-binding site is contributed by Ser50. Asp88 contacts Mg(2+). Substrate contacts are provided by Arg159 and His235.

It belongs to the isocitrate lyase/PEP mutase superfamily. Oxaloacetate decarboxylase family. As to quaternary structure, homotetramer; dimer of dimers. Mg(2+) serves as cofactor.

It catalyses the reaction oxaloacetate + H(+) = pyruvate + CO2. Its function is as follows. Catalyzes the decarboxylation of oxaloacetate into pyruvate. Seems to play a role in maintaining cellular concentrations of bicarbonate and pyruvate. This chain is Oxaloacetate decarboxylase, found in Pseudomonas paraeruginosa (strain DSM 24068 / PA7) (Pseudomonas aeruginosa (strain PA7)).